The chain runs to 215 residues: Peptide methionine sulfoxide reductase MsrA (215 aa).

Cys-58 is an active-site residue.

It belongs to the MsrA Met sulfoxide reductase family.

The catalysed reaction is L-methionyl-[protein] + [thioredoxin]-disulfide + H2O = L-methionyl-(S)-S-oxide-[protein] + [thioredoxin]-dithiol. It catalyses the reaction [thioredoxin]-disulfide + L-methionine + H2O = L-methionine (S)-S-oxide + [thioredoxin]-dithiol. Its function is as follows. Has an important function as a repair enzyme for proteins that have been inactivated by oxidation. Catalyzes the reversible oxidation-reduction of methionine sulfoxide in proteins to methionine. This chain is Peptide methionine sulfoxide reductase MsrA, found in Pseudomonas aeruginosa (strain LESB58).